A 143-amino-acid polypeptide reads, in one-letter code: Large ribosomal subunit protein uL13c (143 aa).

This sequence belongs to the universal ribosomal protein uL13 family. Part of the 50S ribosomal subunit.

It localises to the plastid. The protein resides in the chloroplast. The chain is Large ribosomal subunit protein uL13c from Guillardia theta (Cryptophyte).